The following is a 408-amino-acid chain: Serine/threonine transporter SstT (408 aa).

The next 10 helical transmembrane spans lie at 15-35, 49-69, 85-105, 142-162, 192-212, 218-238, 246-268, 289-309, 317-337, and 362-382; these read MGLIPQITIGIIAGVLLAVIW, FISALKAVAPILVFALVTAAI, LLYVIGTLVAAVVAVIASFVF, ALMEGNFIAILAWAVGLGLML, PLGIFGLVANTLADAGIGALL, LAVIVGCMLFVALVTNPLIVF, YPLVFACLRGSAITAFFTRSSAA, ISIPLGATINMAGAAITISVI, LGIPVDFPTALLLCVVSSIAA, and TEVAMQVVAIGFVISVVQDST.

This sequence belongs to the dicarboxylate/amino acid:cation symporter (DAACS) (TC 2.A.23) family.

The protein localises to the cell inner membrane. It catalyses the reaction L-serine(in) + Na(+)(in) = L-serine(out) + Na(+)(out). The enzyme catalyses L-threonine(in) + Na(+)(in) = L-threonine(out) + Na(+)(out). Involved in the import of serine and threonine into the cell, with the concomitant import of sodium (symport system). The chain is Serine/threonine transporter SstT from Marinobacter nauticus (strain ATCC 700491 / DSM 11845 / VT8) (Marinobacter aquaeolei).